We begin with the raw amino-acid sequence, 172 residues long: MNYFNVGKIVNTQGLQGEMRVLSVTDFAEERFKKGAKLALFDDKDQFAMEVEIASHRKAKNFDIIKFKGMYHINDIEKYKGFSLKIAEENLTDLEDGEFYYHEIIGLDVYENDILIGQIKEILQPGANDVWVVKRKGKKDLLLPYIPPVVLNIDIPNNRVDVELLEGLDDEN.

Positions 96-168 (DGEFYYHEII…RVDVELLEGL (73 aa)) constitute a PRC barrel domain.

This sequence belongs to the RimM family. Binds ribosomal protein uS19.

Its subcellular location is the cytoplasm. An accessory protein needed during the final step in the assembly of 30S ribosomal subunit, possibly for assembly of the head region. Essential for efficient processing of 16S rRNA. May be needed both before and after RbfA during the maturation of 16S rRNA. It has affinity for free ribosomal 30S subunits but not for 70S ribosomes. This Streptococcus suis (strain 05ZYH33) protein is Ribosome maturation factor RimM.